The following is a 193-amino-acid chain: Potassium-transporting ATPase KdpC subunit (193 aa).

The helical transmembrane segment at 7-27 (PLVVLFVVLTAVTGLAYPAVM) threads the bilayer.

It belongs to the KdpC family. As to quaternary structure, the system is composed of three essential subunits: KdpA, KdpB and KdpC.

It localises to the cell inner membrane. Its function is as follows. Part of the high-affinity ATP-driven potassium transport (or Kdp) system, which catalyzes the hydrolysis of ATP coupled with the electrogenic transport of potassium into the cytoplasm. This subunit acts as a catalytic chaperone that increases the ATP-binding affinity of the ATP-hydrolyzing subunit KdpB by the formation of a transient KdpB/KdpC/ATP ternary complex. This chain is Potassium-transporting ATPase KdpC subunit, found in Burkholderia orbicola (strain MC0-3).